Reading from the N-terminus, the 324-residue chain is Antihemorrhagic factor jMSF (324 aa).

Residues 1–19 form the signal peptide; it reads MHFLVALVLLGQIIGSTLS. 2 consecutive Cystatin fetuin-A-type domains span residues 22 to 130 and 141 to 254; these read VRGD…VKCH and RNCP…SDCV. Residues 23–25 carry the Cell attachment site motif; it reads RGD. Intrachain disulfides connect Cys28-Cys315, Cys85-Cys96, Cys110-Cys129, Cys143-Cys146, Cys205-Cys217, Cys230-Cys253, and Cys287-Cys291. An N-linked (GlcNAc...) asparagine glycan is attached at Asn204. An N-linked (GlcNAc...) asparagine glycan is attached at Asn282.

In terms of assembly, homodimer. In terms of tissue distribution, expressed by the liver.

Its subcellular location is the secreted. Functionally, suppress hemorrhage induced by metalloproteinases from the same venom (brevilysin-H3, -H4, -H6) and from habu venom (weak inhibition of the metalloproteinases HR2A). The non-hemorrhagic brevilysin-H2 is strongly inhibited by jMSF, whereas the brevilysin-L6 is not inhibited. Does not inhibit serine and cysteine proteases such as trypsin, chymotrypsin, thermolysin, and papain. The inhibition may occur by formation of a non-covalent complex between this protein and the proteinases at their metalloproteinase domains. The polypeptide is Antihemorrhagic factor jMSF (Gloydius blomhoffii (Mamushi)).